A 112-amino-acid polypeptide reads, in one-letter code: UPF0102 protein THEYE_A1950 (112 aa).

The protein belongs to the UPF0102 family.

The sequence is that of UPF0102 protein THEYE_A1950 from Thermodesulfovibrio yellowstonii (strain ATCC 51303 / DSM 11347 / YP87).